Reading from the N-terminus, the 58-residue chain is MQANSNKPNDNFYNSVDMQELSGETPVGWSATCLDQTICYYLNCDQESSAESDNSDSN.

It is found in the plastid. The protein resides in the chloroplast. This is an uncharacterized protein from Pyropia yezoensis (Susabi-nori).